A 267-amino-acid polypeptide reads, in one-letter code: uncharacterized protein (267 aa).

The protein belongs to the glycosyltransferase 2 family.

This is an uncharacterized protein from Haemophilus influenzae (strain ATCC 51907 / DSM 11121 / KW20 / Rd).